The chain runs to 49 residues: Large ribosomal subunit protein bL33 (49 aa).

Belongs to the bacterial ribosomal protein bL33 family.

The sequence is that of Large ribosomal subunit protein bL33 from Pelotomaculum thermopropionicum (strain DSM 13744 / JCM 10971 / SI).